The chain runs to 344 residues: tRNA N6-adenosine threonylcarbamoyltransferase (344 aa).

Residues histidine 119 and histidine 123 each coordinate Fe cation. Substrate is bound by residues 141 to 145, aspartate 174, glycine 187, aspartate 191, and asparagine 280; that span reads VVSGG. A Fe cation-binding site is contributed by aspartate 310.

The protein belongs to the KAE1 / TsaD family. Requires Fe(2+) as cofactor.

It localises to the cytoplasm. It carries out the reaction L-threonylcarbamoyladenylate + adenosine(37) in tRNA = N(6)-L-threonylcarbamoyladenosine(37) in tRNA + AMP + H(+). In terms of biological role, required for the formation of a threonylcarbamoyl group on adenosine at position 37 (t(6)A37) in tRNAs that read codons beginning with adenine. Is involved in the transfer of the threonylcarbamoyl moiety of threonylcarbamoyl-AMP (TC-AMP) to the N6 group of A37, together with TsaE and TsaB. TsaD likely plays a direct catalytic role in this reaction. The polypeptide is tRNA N6-adenosine threonylcarbamoyltransferase (Listeria welshimeri serovar 6b (strain ATCC 35897 / DSM 20650 / CCUG 15529 / CIP 8149 / NCTC 11857 / SLCC 5334 / V8)).